Consider the following 31-residue polypeptide: Cytochrome b6-f complex subunit 6 (31 aa).

A helical membrane pass occupies residues 4 to 24 (ITSYFGFLLAALTITSALLIG).

Belongs to the PetL family. The 4 large subunits of the cytochrome b6-f complex are cytochrome b6, subunit IV (17 kDa polypeptide, PetD), cytochrome f and the Rieske protein, while the 4 small subunits are PetG, PetL, PetM and PetN. The complex functions as a dimer.

It localises to the plastid. Its subcellular location is the chloroplast thylakoid membrane. Functionally, component of the cytochrome b6-f complex, which mediates electron transfer between photosystem II (PSII) and photosystem I (PSI), cyclic electron flow around PSI, and state transitions. PetL is important for photoautotrophic growth as well as for electron transfer efficiency and stability of the cytochrome b6-f complex. The polypeptide is Cytochrome b6-f complex subunit 6 (Piper cenocladum (Ant piper)).